The following is a 208-amino-acid chain: FMN-dependent NADH:quinone oxidoreductase 1 (208 aa).

17-19 contributes to the FMN binding site; it reads SVS.

The protein belongs to the azoreductase type 1 family. As to quaternary structure, homodimer. FMN serves as cofactor.

It carries out the reaction 2 a quinone + NADH + H(+) = 2 a 1,4-benzosemiquinone + NAD(+). The enzyme catalyses N,N-dimethyl-1,4-phenylenediamine + anthranilate + 2 NAD(+) = 2-(4-dimethylaminophenyl)diazenylbenzoate + 2 NADH + 2 H(+). Functionally, quinone reductase that provides resistance to thiol-specific stress caused by electrophilic quinones. In terms of biological role, also exhibits azoreductase activity. Catalyzes the reductive cleavage of the azo bond in aromatic azo compounds to the corresponding amines. This is FMN-dependent NADH:quinone oxidoreductase 1 from Listeria monocytogenes serovar 1/2a (strain ATCC BAA-679 / EGD-e).